The chain runs to 977 residues: MAAPPKAWKAEYAKSGRSSCKSCRSPIGKDQLRLGKMVQATQFDGLMPMWNHASCILSKKNQIKSVDDVEGIDTLRWDDQEKIRNYVGSAPATASSAAAISDKCTIEVAKSARTSCRRCGEKIKKGTVRVSSKLEGQGWYHASCFLEMSPAATVENFSGWEILSHEDKRAVLDLVKKDAPSSGQTSSKGSKRKNNQNDIHDCKAPKIIRSISEGTAEDKGKAVVSHDSNANSSDLQEKLKEQSDTLWKLKDELKKHVSTAELRNMLEANGQDTSGPERHLLDRCADGMLFGALGTCPVCSSFLYYHGGQYHCSGYVSEWSKCTYSTTEPVRSKKKWKIPDEMDNGYLTKWFKSQKAKKPERVLPPMSPEKSLCQSTQQNRSFLSEGLDKLRVSIVGQSKDVVDGWKQKLKDAGANFNATVTKDSSCLVLCSELESENAEVKKARRLKIPILREGYLGECIRKNRVLPFDLYKVEAALESSKGGTMTVKVKGRSAVHESSGLQDTGHILEDGKSIYNTTLNMSDLTRGVNSYYILQVIEEDNGSDCYVFRKWGRVGNEKIGGTKLEEMSKIHAIQEFRRLFLEKTGNPWEAWEQKTNFQKQPGKFYPLDIDYGVRQGPKRKDIDKMKSSLPPQLLELMNMLFNIETYRAAMLEFKINMSEMPLGKLSKENIQKGFEALTEIQNLLGNTNNQELAVRESLIVAASNRFFTLIPSIHPHIIQDEDDLMVKVKMLEALQDIEIASKLVGFDSDNDESLDDKYKKLRCAITPLPHDCEDYKLVEKYLLNTHAPTHKEWSLELEEVFSLDRDGEFSKYSRYKNNLHNKMLLWHGSRLTNYVGILSQGLRIAPPEAPVTGYMFGKGLYFADLVSKSAQYCYVDRKNPVGLMLLSEVALGDMYELKKATSMDKPPRGKHSTKGLGKTVPLESEFAKWRDDVVVPCGKPVPASIKTSELMYNEYIVYNTSQVKMQYLLKVRFHHKR.

2 PARP-type zinc fingers span residues 8–91 (WKAE…GSAP) and 104–179 (CTIE…KKDA). Positions 20, 23, 52, 55, 116, 119, 141, and 144 each coordinate Zn(2+). Disordered stretches follow at residues 177 to 199 (KDAP…QNDI) and 218 to 237 (DKGK…DLQE). The PADR1 zinc-binding domain occupies 227 to 365 (DSNANSSDLQ…AKKPERVLPP (139 aa)). The 35-residue stretch at 254-288 (KKHVSTAELRNMLEANGQDTSGPERHLLDRCADGM) folds into the SAP domain. The segment at 291–335 (GALGTCPVCSSFLYYHGGQYHCSGYVSEWSKCTYSTTEPVRSKKK) is zinc ribbon. The Zn(2+) site is built by cysteine 296, cysteine 299, cysteine 312, and cysteine 322. The BRCT domain maps to 381–473 (SFLSEGLDKL…RVLPFDLYKV (93 aa)). The 101-residue stretch at 504–604 (TGHILEDGKS…TNFQKQPGKF (101 aa)) folds into the WGR domain. The region spanning 626 to 745 (KSSLPPQLLE…DIEIASKLVG (120 aa)) is the PARP alpha-helical domain. Residues 752-977 (ESLDDKYKKL…LLKVRFHHKR (226 aa)) enclose the PARP catalytic domain.

This sequence belongs to the ARTD/PARP family.

It is found in the nucleus. It carries out the reaction NAD(+) + (ADP-D-ribosyl)n-acceptor = nicotinamide + (ADP-D-ribosyl)n+1-acceptor + H(+).. The enzyme catalyses L-aspartyl-[protein] + NAD(+) = 4-O-(ADP-D-ribosyl)-L-aspartyl-[protein] + nicotinamide. The catalysed reaction is L-glutamyl-[protein] + NAD(+) = 5-O-(ADP-D-ribosyl)-L-glutamyl-[protein] + nicotinamide. Involved in the base excision repair (BER) pathway, by catalyzing the poly(ADP-ribosyl)ation of a limited number of acceptor proteins involved in chromatin architecture and in DNA metabolism. This modification follows DNA damages and appears as an obligatory step in a detection/signaling pathway leading to the reparation of DNA strand breaks. This chain is Poly [ADP-ribose] polymerase 1 (PARP1), found in Oryza sativa subsp. japonica (Rice).